The sequence spans 190 residues: Dynein axonemal light chain 1 (190 aa).

Position 2 is an N-acetylalanine (alanine 2). 4 LRR repeats span residues 49–70 (NCEK…NGLK), 71–92 (NLRI…EAVG), 94–115 (TLEE…HIMK), and 116–137 (KLKI…VKLA). The residue at position 56 (serine 56) is a Phosphoserine. In terms of domain architecture, LRRCT spans 150–190 (NPLEEKHSAENNWIEEATKRVPKLKKLDGTPVIKGDEEEDN).

It belongs to the dynein light chain LC1-type family. Interacts with ZMYND10 (via C-terminus). Interacts with DNAH5, a outer arm dynein heavy chain. Interacts with tubulin located within the A-tubule of the outer doublets in a ATP-independent manner. As to expression, expressed in tissues carrying motile cilia such as respiratory epithelia, ependyma and testis.

Its subcellular location is the cytoplasm. The protein resides in the cytoskeleton. The protein localises to the cilium axoneme. Part of the multisubunit axonemal ATPase complexes that generate the force for cilia motility and govern beat frequency. Component of the outer arm dynein (ODA). May be involved in a mechanosensory feedback mechanism controlling ODA activity based on external conformational cues by tethering the outer arm dynein heavy chain (DNAH5) to the microtubule within the axoneme. Important for ciliary function in the airways and for the function of the cilia that produce the nodal flow essential for the determination of the left-right asymmetry. The chain is Dynein axonemal light chain 1 from Homo sapiens (Human).